The chain runs to 1297 residues: Protein Atossa (1297 aa).

Disordered stretches follow at residues 1-22 (MIPTSVTNSPPPAGLGQNGASA) and 117-149 (TNPYGSMGGSENRAVNGSGSTGSPSSSSLTHQR). A compositionally biased stretch (low complexity) spans 133–144 (GSGSTGSPSSSS). Residues 174–182 (VSLAINDLN) are transactivation domain 1 (TAD1). Disordered regions lie at residues 206–227 (SSAGGGTNNSSAASSPGSNSSD), 287–311 (TPTTTATATASSGASSSASRPKHGP), 518–655 (GLPH…ETQS), 704–741 (SNGTANGSTNGATDDGDDSDTTASEMEETSSCSLSSAD), and 1017–1048 (AAHKRRSRHLSDRSDRSSLGSDEQLSDEDLES). 2 stretches are compositionally biased toward low complexity: residues 213–226 (NNSSAASSPGSNSS) and 287–305 (TPTTTATATASSGASSSAS). A compositionally biased stretch (polar residues) spans 564–578 (SALTPTTTAGGSNCD). Positions 605–620 (QKYRKRMQRRDKKRER) are enriched in basic residues. Low complexity-rich tracts occupy residues 643–655 (SQTQSQTTSETQS) and 706–716 (GTANGSTNGAT). Residues 717-731 (DDGDDSDTTASEMEE) show a composition bias toward acidic residues. Positions 1074–1132 (LLGNLEESLLQRRLMPKIEVMGFTLQLGASGGFCPTQVNIPAVSYFYELHGETLSTPYL) are required for macropage invasion. The tract at residues 1150–1158 (VQATLLNPI) is transactivation domain 2 (TAD2). Positions 1192 to 1213 (SQDQDEGHKVPRSPTVTSTTSK) are disordered. Residues 1203–1212 (RSPTVTSTTS) show a composition bias toward low complexity.

The protein belongs to the ATOS family. Expressed in macrophages.

The protein localises to the nucleus. Functionally, transcription regulator that synchronizes transcriptional and translational programs to promote macrophage invasion of tissues. Required in macrophages for their early invasion into the extended germband. Induces transcriptional expression of metabolic enzymes as well as of the translational regulator pths/DDX47. With pths/DDX47, adjusts transcription and translation of a subset of OXPHOS genes to increase mitochondrial bioenergetics and allow macrophage tissue invasion. The protein is Protein Atossa of Drosophila melanogaster (Fruit fly).